Consider the following 963-residue polypeptide: Kinesin-1 heavy chain (963 aa).

Ala2 carries the N-acetylalanine modification. One can recognise a Kinesin motor domain in the interval 8 to 325 (NIKVMCRFRP…LLFGQRAKTI (318 aa)). Residue 85-92 (GQTSSGKT) coordinates ATP. Lys213 participates in a covalent cross-link: Glycyl lysine isopeptide (Lys-Gly) (interchain with G-Cter in SUMO2). A coiled-coil region spans residues 329 to 914 (VCVNVELTAE…AVRSKNMARR (586 aa)). The disordered stretch occupies residues 908–963 (SKNMARRGHSAQIAKPIRPGQHPAASPTHPGTVRGGGSFVQNNQPVGLRGGGGKQS). The segment at 915–963 (GHSAQIAKPIRPGQHPAASPTHPGTVRGGGSFVQNNQPVGLRGGGGKQS) is globular. Phosphoserine is present on residues Ser933 and Ser945. Omega-N-methylarginine is present on Arg956.

The protein belongs to the TRAFAC class myosin-kinesin ATPase superfamily. Kinesin family. Kinesin subfamily. Oligomer composed of two heavy chains and two light chains. Interacts with GRIP1 and PPP1R42. Interacts with SYBU. Interacts with JAKMIP1. Interacts with PLEKHM2. Interacts with ECPAS. Interacts with ZFYVE27. Found in a complex with OGT, RHOT1, RHOT2 and TRAK1. Interacts with APP (via cytoplasmic domain).

The protein localises to the cytoplasm. Its subcellular location is the cytoskeleton. It is found in the cytolytic granule membrane. The protein resides in the lysosome membrane. Microtubule-dependent motor required for normal distribution of mitochondria and lysosomes. May be involved in the mechanisms of growth arrest induced by exposure to DNA-damaging drugs or by cellular senescence. Can induce formation of neurite-like membrane protrusions in non-neuronal cells in a ZFYVE27-dependent manner. Regulates centrosome and nuclear positioning during mitotic entry. During the G2 phase of the cell cycle in a BICD2-dependent manner, antagonizes dynein function and drives the separation of nuclei and centrosomes. Required for anterograde axonal transportation of MAPK8IP3/JIP3 which is essential for MAPK8IP3/JIP3 function in axon elongation. Through binding with PLEKHM2 and ARL8B, directs lysosome movement toward microtubule plus ends. Involved in NK cell-mediated cytotoxicity. Drives the polarization of cytolytic granules and microtubule-organizing centers (MTOCs) toward the immune synapse between effector NK lymphocytes and target cells. This Mus musculus (Mouse) protein is Kinesin-1 heavy chain (Kif5b).